The sequence spans 392 residues: RNA-binding protein 42 (392 aa).

Positions 293–371 (FRIFCGDLGN…RPIKLRKSQW (79 aa)) constitute an RRM domain. The tract at residues 372 to 392 (KDRNMDVVRKKQREKKKLGLR) is disordered. Over residues 381-392 (KKQREKKKLGLR) the composition is skewed to basic residues.

It belongs to the RRM RBM42 family.

The protein resides in the nucleus. It is found in the cytoplasm. In terms of biological role, may bind RNA. This is RNA-binding protein 42 (rbm42) from Xenopus tropicalis (Western clawed frog).